Reading from the N-terminus, the 335-residue chain is Glyceraldehyde-3-phosphate dehydrogenase (335 aa).

NAD(+) contacts are provided by residues 13-14, D34, M79, and S121; that span reads RI. D-glyceraldehyde 3-phosphate-binding positions include 151–153, T182, 211–212, and R234; these read SCT and TG. The Nucleophile role is filled by C152. S-nitrosocysteine is present on C152. N316 contributes to the NAD(+) binding site.

It belongs to the glyceraldehyde-3-phosphate dehydrogenase family. In terms of assembly, homotetramer. Post-translationally, S-nitrosylation of Cys-152 leads to translocation to the nucleus.

The protein localises to the cytoplasm. Its subcellular location is the cytosol. The protein resides in the cytoskeleton. It localises to the nucleus. It carries out the reaction D-glyceraldehyde 3-phosphate + phosphate + NAD(+) = (2R)-3-phospho-glyceroyl phosphate + NADH + H(+). It catalyses the reaction S-nitroso-L-cysteinyl-[GAPDH] + L-cysteinyl-[protein] = L-cysteinyl-[GAPDH] + S-nitroso-L-cysteinyl-[protein]. It participates in carbohydrate degradation; glycolysis; pyruvate from D-glyceraldehyde 3-phosphate: step 1/5. Functionally, has both glyceraldehyde-3-phosphate dehydrogenase and nitrosylase activities, thereby playing a role in glycolysis and nuclear functions, respectively. Glyceraldehyde-3-phosphate dehydrogenase is a key enzyme in glycolysis that catalyzes the first step of the pathway by converting D-glyceraldehyde 3-phosphate (G3P) into 3-phospho-D-glyceroyl phosphate. Participates in nuclear events including transcription, RNA transport, DNA replication and apoptosis. Nuclear functions are probably due to the nitrosylase activity that mediates cysteine S-nitrosylation of nuclear target proteins such as SIRT1, HDAC2 and PRKDC. The sequence is that of Glyceraldehyde-3-phosphate dehydrogenase (gapdh) from Oncorhynchus mykiss (Rainbow trout).